We begin with the raw amino-acid sequence, 247 residues long: Disease resistance protein BAK6 (247 aa).

The N-terminal stretch at 1 to 24 (MAAVQFAAAGVLTGLLALATLASC) is a signal peptide. 3 N-linked (GlcNAc...) asparagine glycosylation sites follow: N66, N104, and N113. LRR repeat units follow at residues 90-114 (LESL…LGNL), 116-138 (DLIS…LGSI), 139-161 (STLR…SFGN), 162-186 (LTSL…LGNI), 188-210 (SLQF…VLSL), and 213-237 (VGNL…GLRV). 2 N-linked (GlcNAc...) asparagine glycosylation sites follow: N150 and N161. Residue N215 is glycosylated (N-linked (GlcNAc...) asparagine).

Interacts with WAK17 isoform 1; the interaction is direct. In terms of assembly, (Microbial infection) Interacts with G.zeae CFEM1; the interaction is direct. Interacts with G.zeae CFEMN1; the interaction is direct. Interacts with G.zeae CFEM5; the interaction is direct.

Functionally, contributes to activation of the hypersensitive response, a form of programmed cell death, upon fungal infection. May sense the presence of fungal material and relay the signal to WAK17 isoform 1. This Zea mays (Maize) protein is Disease resistance protein BAK6.